A 180-amino-acid chain; its full sequence is Adenine phosphoribosyltransferase (180 aa).

Belongs to the purine/pyrimidine phosphoribosyltransferase family. Homodimer.

Its subcellular location is the cytoplasm. It carries out the reaction AMP + diphosphate = 5-phospho-alpha-D-ribose 1-diphosphate + adenine. The protein operates within purine metabolism; AMP biosynthesis via salvage pathway; AMP from adenine: step 1/1. Functionally, catalyzes a salvage reaction resulting in the formation of AMP, that is energically less costly than de novo synthesis. This chain is Adenine phosphoribosyltransferase, found in Sinorhizobium medicae (strain WSM419) (Ensifer medicae).